The chain runs to 943 residues: MPNPNDVTIDIPLTSVSSRGQTGARNNSTNIPNSPSGGYSAGAEHNGGAEKGGLTSSPPSSSLGFGHRRRRTINDKTGLPAEEPEDGTVTRMGRFYQAVLNFSTVTRYLIYIAPLAALLAIPIIVGATAAEDAKIGGVSLPWFFCWVEVVWVSLWVCKLVAKVIPFVFQFVCGIVSAGTRKYALILRNLEIPITMVLWMIVSLVTFLPIMVYNPRNKREGDTETKSWEKSVKNVLFAFLVCALIFLGEKTLVQLISISYHRKQFDARIKESKRNINLIGILYDASRSMFPMYCKEFREDDAIISDSILLGGPETGRPGHSRSNSAAPLRFIRGVQQNVGRIGGKITGALGDVAHEITGKQVFNSSAARSIVSEALERRRSSEALARRIWMSFVIEGREALYLDDIMEVLGAGKEAEAEECFTMLDRDGNGDISLDEIILAISEIGRTRKTLNHSVHDVDQAIHVLDNLLATIAFIIAVLVFVSFVTSGFGTVIAAGATSLLSLSFVFATTAQEVLGSCIFLFVKHPFDIGDRVEIDSKPYIVQRISLLYSVFRNVNDNRVTQIPNVVLNTVWIDNYSRSSAMQEKLTIEVNIDTTTEEIQALKDEIETFVRSPDNKRDFHPDVDIEVSGVGALDKLELTVGLFHKSNWAIESVRAARRSKFMVALVAAVKKVPIRTPGAAAEDAAAADGDRPDDKPDDAEQPPARQSSISEGIRHPTVPDDSFPSDSKSTGVDLGRPGSVQRRGASATAATGNNSAGSAYSETTLNNTVSEPYQRSFTPNTGDRDTDHYHGSMSSPVTERHLGVSHDSIARKASTASTGRRRAGIMTTANQSLASPTTMQSESALPPHLQPPPPLQPSSSQYSQQYPQQQSQSPYSYTYSERYDQPESSLQPLEHTTSYNQSLPQVYEYAPAADRNSLEGHSPHVDPRHMTEEQRRNYESRRL.

Residues 1–67 (MPNPNDVTID…PPSSSLGFGH (67 aa)) form a disordered region. Topologically, residues 1 to 107 (MPNPNDVTID…AVLNFSTVTR (107 aa)) are cytoplasmic. Positions 14–37 (TSVSSRGQTGARNNSTNIPNSPSG) are enriched in polar residues. A helical transmembrane segment spans residues 108-130 (YLIYIAPLAALLAIPIIVGATAA). Topologically, residues 131–149 (EDAKIGGVSLPWFFCWVEV) are lumenal. The helical transmembrane segment at 150–175 (VWVSLWVCKLVAKVIPFVFQFVCGIV) threads the bilayer. The Cytoplasmic segment spans residues 176-195 (SAGTRKYALILRNLEIPITM). A helical membrane pass occupies residues 196-214 (VLWMIVSLVTFLPIMVYNP). The Lumenal portion of the chain corresponds to 215–233 (RNKREGDTETKSWEKSVKN). A helical membrane pass occupies residues 234-259 (VLFAFLVCALIFLGEKTLVQLISISY). At 260–468 (HRKQFDARIK…DQAIHVLDNL (209 aa)) the chain is on the cytoplasmic side. An EF-hand domain is found at 412 to 447 (GKEAEAEECFTMLDRDGNGDISLDEIILAISEIGRT). 5 residues coordinate Ca(2+): Asp-425, Asp-427, Asn-429, Asp-431, and Glu-436. Residues 469-489 (LATIAFIIAVLVFVSFVTSGF) form a helical membrane-spanning segment. At 490–502 (GTVIAAGATSLLS) the chain is on the lumenal side. A helical membrane pass occupies residues 503-523 (LSFVFATTAQEVLGSCIFLFV). Topologically, residues 524 to 943 (KHPFDIGDRV…QRRNYESRRL (420 aa)) are cytoplasmic. A disordered region spans residues 677-943 (PGAAAEDAAA…QRRNYESRRL (267 aa)). Low complexity-rich tracts occupy residues 678-687 (GAAAEDAAAA) and 744-759 (GASATAATGNNSAGSA). Polar residues predominate over residues 760-781 (YSETTLNNTVSEPYQRSFTPNT). Over residues 798–810 (TERHLGVSHDSIA) the composition is skewed to basic and acidic residues. Positions 827 to 842 (TTANQSLASPTTMQSE) are enriched in polar residues. Over residues 857 to 880 (PSSSQYSQQYPQQQSQSPYSYTYS) the composition is skewed to low complexity. A compositionally biased stretch (polar residues) spans 886–904 (PESSLQPLEHTTSYNQSLP). Basic and acidic residues predominate over residues 916–943 (NSLEGHSPHVDPRHMTEEQRRNYESRRL).

Belongs to the MscS (TC 1.A.23) family.

The protein resides in the cell membrane. The enzyme catalyses Ca(2+)(in) = Ca(2+)(out). Functionally, acts as a mechanosensitive calcium channel in response to membrane stretch. Regulates intracellular calcium levels and cell volume for survival in response to hypo-osmotic shock. Involved in maintaining vacuole integrity and protecting the nuclear envelope upon hypo-osmotic shock. seems to contribute to CaCl2 toxicityIn contracstz to mscA, mscB seems to contribute to CaCl(2) toxicity. This chain is Mechanosensitive ion channel protein BA, found in Emericella nidulans (strain FGSC A4 / ATCC 38163 / CBS 112.46 / NRRL 194 / M139) (Aspergillus nidulans).